Reading from the N-terminus, the 314-residue chain is E3 ubiquitin-protein ligase CHIP (314 aa).

Positions 1-11 are enriched in basic and acidic residues; it reads MKGKEEREREG. The segment at 1–47 is disordered; sequence MKGKEEREREGGGGAVGPGAAGPGAGGGSPEKSHSAQEHKEQGNRLF. The segment covering 12-29 has biased composition (gly residues); sequence GGGAVGPGAAGPGAGGGS. A compositionally biased stretch (basic and acidic residues) spans 31–43; the sequence is EKSHSAQEHKEQG. TPR repeat units follow at residues 36 to 69, 70 to 103, and 105 to 137; these read AQEHKEQGNRLFGGRKYPEAAAAYGRAINRNPLV, AVYYTNRALCYLKMQQHDKALADCKRALELDGQS, and KAHFFLGQCQMEMENYDEAIANLQRAYNLAKEQ. In terms of domain architecture, U-box spans 237 to 311; that stretch reads DIPDYLCGKI…DAFISENGWV (75 aa).

In terms of assembly, homodimer.

The protein localises to the cytoplasm. It is found in the nucleus. Its subcellular location is the mitochondrion. It catalyses the reaction S-ubiquitinyl-[E2 ubiquitin-conjugating enzyme]-L-cysteine + [acceptor protein]-L-lysine = [E2 ubiquitin-conjugating enzyme]-L-cysteine + N(6)-ubiquitinyl-[acceptor protein]-L-lysine.. Its function is as follows. E3 ubiquitin-protein ligase which targets misfolded chaperone substrates towards proteasomal degradation. Collaborates with ATXN3 in the degradation of misfolded chaperone substrates: ATXN3 restricting the length of ubiquitin chain attached to STUB1/CHIP substrates and preventing further chain extension. The polypeptide is E3 ubiquitin-protein ligase CHIP (Gallus gallus (Chicken)).